The chain runs to 400 residues: Serine/threonine transporter SstT (400 aa).

The next 9 membrane-spanning stretches (helical) occupy residues 9–29 (LVTQ…VWPA), 36–56 (ILGS…VFVL), 75–95 (VLVL…VASM), 134–154 (ALLE…GLAL), 175–195 (VIQL…ASTF), 209–229 (LLAV…PLIV), 281–301 (IAIP…ISVL), 323–343 (VVAS…LLLI), and 349–369 (LFGI…IIGI).

This sequence belongs to the dicarboxylate/amino acid:cation symporter (DAACS) (TC 2.A.23) family.

The protein localises to the cell inner membrane. The enzyme catalyses L-serine(in) + Na(+)(in) = L-serine(out) + Na(+)(out). The catalysed reaction is L-threonine(in) + Na(+)(in) = L-threonine(out) + Na(+)(out). Functionally, involved in the import of serine and threonine into the cell, with the concomitant import of sodium (symport system). This is Serine/threonine transporter SstT from Acidovorax sp. (strain JS42).